A 258-amino-acid chain; its full sequence is Small ribosomal subunit protein uS2 (258 aa).

This sequence belongs to the universal ribosomal protein uS2 family.

This is Small ribosomal subunit protein uS2 from Granulibacter bethesdensis (strain ATCC BAA-1260 / CGDNIH1).